Consider the following 73-residue polypeptide: Crustacean hyperglycemic hormone (73 aa).

Intrachain disulfides connect Cys-7-Cys-43, Cys-23-Cys-39, and Cys-26-Cys-52. At Val-73 the chain carries Valine amide.

Belongs to the arthropod CHH/MIH/GIH/VIH hormone family. In terms of tissue distribution, produced by the medulla terminalis X-organ in the eyestalks and transported to the sinus gland where they are stored and released.

The protein resides in the secreted. In terms of biological role, hormone found in the sinus gland of isopods and decapods which controls the blood sugar level. Has a secretagogue action over the amylase released from the midgut gland. May act as a stress hormone and may be involved in the control of molting and reproduction. This is Crustacean hyperglycemic hormone from Jasus lalandii (Cape rock lobster).